Here is a 173-residue protein sequence, read N- to C-terminus: Inorganic pyrophosphatase (173 aa).

Residues K29, R43, and Y55 each contribute to the substrate site. Residues D65, D70, and D102 each contribute to the Mg(2+) site. Y141 lines the substrate pocket.

This sequence belongs to the PPase family. In terms of assembly, homohexamer. Mg(2+) is required as a cofactor.

The protein localises to the cytoplasm. It catalyses the reaction diphosphate + H2O = 2 phosphate + H(+). Catalyzes the hydrolysis of inorganic pyrophosphate (PPi) forming two phosphate ions. In Rickettsia felis (strain ATCC VR-1525 / URRWXCal2) (Rickettsia azadi), this protein is Inorganic pyrophosphatase.